The following is a 529-amino-acid chain: UDP-glucuronosyltransferase 2B7 (529 aa).

The signal sequence occupies residues 1–23; sequence MSVKWTSVILLIQLSFCFSSGNC. N-linked (GlcNAc...) asparagine glycans are attached at residues Asn67, Asn68, and Asn315. UDP-alpha-D-glucuronate is bound by residues 373–379 and Asp398; that span reads THGGANG. The chain crosses the membrane as a helical span at residues 493 to 509; the sequence is VIGFLLVCVATVIFIVT.

Belongs to the UDP-glycosyltransferase family.

It is found in the endoplasmic reticulum membrane. It carries out the reaction glucuronate acceptor + UDP-alpha-D-glucuronate = acceptor beta-D-glucuronoside + UDP + H(+). The catalysed reaction is 17alpha-estradiol + UDP-alpha-D-glucuronate = 17alpha-estradiol 17-O-(beta-D-glucuronate) + UDP + H(+). It catalyses the reaction 17beta-estradiol + UDP-alpha-D-glucuronate = 17beta-estradiol 17-O-(beta-D-glucuronate) + UDP + H(+). The enzyme catalyses 2-hydroxy-17beta-estradiol + UDP-alpha-D-glucuronate = 2-hydroxy-17beta-estradiol 3-O-(beta-D-glucuronate) + UDP + H(+). It carries out the reaction 4-hydroxy-17beta-estradiol + UDP-alpha-D-glucuronate = 17beta-estradiol 4-O-(beta-D-glucuronate) + UDP + H(+). The catalysed reaction is 4-hydroxyestrone + UDP-alpha-D-glucuronate = estrone 4-O-(beta-D-glucuronate) + UDP + H(+). It catalyses the reaction 16alpha-hydroxyestrone + UDP-alpha-D-glucuronate = 16alpha-hydroxyestrone 16-O-(beta-D-glucuronate) + UDP + H(+). The enzyme catalyses 16alpha,17beta-estriol + UDP-alpha-D-glucuronate = 16alpha,17beta-estriol 16-O-(beta-D-glucuronate) + UDP + H(+). It carries out the reaction 16beta,17beta-estriol + UDP-alpha-D-glucuronate = 16beta,17beta-estriol 16-O-(beta-D-glucuronate) + UDP + H(+). The catalysed reaction is 16alpha,17alpha-estriol + UDP-alpha-D-glucuronate = 16alpha,17alpha-estriol 16-O-(beta-D-glucuronate) + UDP + H(+). It catalyses the reaction 16alpha,17alpha-estriol + UDP-alpha-D-glucuronate = 16alpha,17alpha-estriol 17-O-(beta-D-glucuronate) + UDP + H(+). The enzyme catalyses epitestosterone + UDP-alpha-D-glucuronate = epitestosterone 17-O-(beta-D-glucuronate) + UDP + H(+). It carries out the reaction hyodeoxycholate + UDP-alpha-D-glucuronate = hyodeoxycholate 6-O-(beta-D-glucuronate) + UDP + H(+). The catalysed reaction is hyocholate + UDP-alpha-D-glucuronate = hyocholate 6-O-(beta-D-glucuronate) + UDP + H(+). It catalyses the reaction all-trans-retinoate + UDP-alpha-D-glucuronate = all-trans-retinoyl-1-O-(beta-D-glucuronate) + UDP. The enzyme catalyses all-trans-4-hydroxyretinoate + UDP-alpha-D-glucuronate = all-trans-4-hydroxy-4-O-(beta-D-glucuronide)-retinoate + UDP + H(+). It carries out the reaction (E)-ferulate + UDP-alpha-D-glucuronate = (E)-ferulic acid beta-D-glucuronate ester + UDP. The catalysed reaction is 8-iso-prostaglandin F2alpha + UDP-alpha-D-glucuronate = 8-iso-prostaglandin F2alpha-glucuronide + UDP + H(+). It catalyses the reaction 5-epi-5-F2t-IsoP + UDP-alpha-D-glucuronate = 5-epi-5-F2t-IsoP-glucuronide + UDP + H(+). The enzyme catalyses (5Z,8Z,11Z,14Z)-eicosatetraenoate + UDP-alpha-D-glucuronate = O-[(5Z),(8Z),(11Z),(14Z)-eicosatetraenoyl]-beta-D-glucuronate + UDP. It carries out the reaction 15-hydroxy-(5Z,8Z,11Z,13E)-eicosatetraenoate + UDP-alpha-D-glucuronate = 15-O-(beta-D-glucuronosyl)-(5Z,8Z,11Z,14Z)-eicosatetraenoate + UDP + H(+). The catalysed reaction is 20-hydroxy-(5Z,8Z,11Z,14Z)-eicosatetraenoate + UDP-alpha-D-glucuronate = 20-O-(beta-D-glucuronosyl)-(5Z,8Z,11Z,14Z)-eicosatetraenoate + UDP + H(+). It catalyses the reaction (E)-ferulate + UDP-alpha-D-glucuronate = (E)-4-O-(beta-D-glucuronosyl)-ferulate + UDP + H(+). The enzyme catalyses prostaglandin B1 + UDP-alpha-D-glucuronate = 15-O-(beta-D-glucuronosyl)-prostaglandin B1 + UDP + H(+). It carries out the reaction mycophenolate + UDP-alpha-D-glucuronate = mycophenolic acid O-acyl-beta-D-glucuronide + UDP. The catalysed reaction is losartan + UDP-alpha-D-glucuronate = losartan-2-N-beta-D-glucuronide + UDP. It catalyses the reaction candesartan + UDP-alpha-D-glucuronate = candesartan O-beta-D-glucuronoside + UDP. The enzyme catalyses candesartan + UDP-alpha-D-glucuronate = candesartan-2-N-beta-D-glucuronide + UDP. It carries out the reaction zolasartan + UDP-alpha-D-glucuronate = zolarsartan O-beta-D-glucuronoside + UDP. Its function is as follows. UDP-glucuronosyltransferase (UGT) that catalyzes phase II biotransformation reactions in which lipophilic substrates are conjugated with glucuronic acid to increase the metabolite's water solubility, thereby facilitating excretion into either the urine or bile. Essential for the elimination and detoxification of drugs, xenobiotics and endogenous compounds. Catalyzes the glucuronidation of endogenous steroid hormones such as androgens (epitestosterone, androsterone) and estrogens (estradiol, epiestradiol, estriol, catechol estrogens). Also regulates the levels of retinoic acid, a major metabolite of vitamin A involved in apoptosis, cellular growth and differentiation, and embryonic development. Contributes to bile acid (BA) detoxification by catalyzing the glucuronidation of BA substrates, which are natural detergents for dietary lipids absorption. Involved in the glucuronidation of arachidonic acid (AA) and AA-derived eicosanoids including 15-HETE, 20-HETE, PGE2, PGB1 and F2-isoprostanes (8-iso-PGF2alpha and 5-epi-5-F2t-IsoP). Involved in the glucuronidation of the phytochemical ferulic acid at the phenolic or the carboxylic acid group. Involved in the glucuronidation of the AGTR1 angiotensin receptor antagonist losartan, caderastan and zolarsatan, drugs which can inhibit the effect of angiotensin II. Also metabolizes mycophenolate, an immunosuppressive agent. The protein is UDP-glucuronosyltransferase 2B7 of Homo sapiens (Human).